The sequence spans 112 residues: cAMP-regulated phosphoprotein 19 (112 aa).

Met-1 bears the N-acetylmethionine mark. The segment covering Met-1 to Ala-11 has biased composition (low complexity). The disordered stretch occupies residues Met-1–Leu-49. Ser-2 carries the N-acetylserine modification. A phosphoserine mark is found at Ser-2 and Ser-23. A compositionally biased stretch (basic and acidic residues) spans Glu-12–Leu-32. A phosphoserine; by GWL mark is found at Ser-62 and Ser-104. The interval Lys-73 to Gly-112 is disordered. A Phosphoserine; by PKA modification is found at Ser-104. N6-acetyllysine is present on Lys-109.

Belongs to the endosulfine family. Interacts (when phosphorylated at Ser-62) with PPP2R2D. Interacts with SNCA. Interacts with PPP2R2A; the interaction is direct and this interaction inhibits PP2A activity. Post-translationally, phosphorylation at Ser-62 by MASTL/GWL during mitosis is essential for interaction with PPP2R2D (PR55-delta) and subsequent inactivation of PP2A. Phosphorylated by PKA.

It is found in the cytoplasm. In terms of biological role, protein phosphatase inhibitor that specifically inhibits protein phosphatase 2A (PP2A) during mitosis. Inhibition of PP2A is enhanced when ARPP19 is phosphorylated. When phosphorylated at Ser-62 during mitosis, specifically interacts with PPP2R2D (PR55-delta) and inhibits its activity, leading to inactivation of PP2A, an essential condition to keep cyclin-B1-CDK1 activity high during M phase. May indirectly enhance GAP-43 expression. This Homo sapiens (Human) protein is cAMP-regulated phosphoprotein 19 (ARPP19).